The sequence spans 589 residues: Guanylate-binding protein 1 (589 aa).

A GTPase domain (Globular) region spans residues Met1–Cys309. Residues Thr35 to Gly276 form the GB1/RHD3-type G domain. GTP is bound by residues Tyr47–Tyr53, Leu67–Ser69, and Asp97–Leu101. Ser156 is subject to Phosphoserine. A Cysteine methyl ester modification is found at Cys586. Cys586 carries S-farnesyl cysteine lipidation. Cys586 carries the S-geranylgeranyl cysteine; partial lipid modification. Thr587 carries the post-translational modification Phosphothreonine. Positions Thr587–Leu589 are cleaved as a propeptide — removed in mature form.

The protein belongs to the TRAFAC class dynamin-like GTPase superfamily. GB1/RHD3 GTPase family. GB1 subfamily. Homodimer; homodimerization occurs upon GTP-binding and is required for the second hydrolysis step from GDP to GMP. Undergoes conformational changes and oligomerization upon GTP-binding and hydrolysis. Heterodimer with other family members, including GBP2, GBP3, GBP4 and GBP5. Dimerization regulates subcellular location to membranous structures. Interacts with SQSTM1. Interacts (when phosphorylated) with 14-3-3 protein sigma (SFN); leading to GBP1 retention in the cytosol and inactivation. Isoprenylation of mouse GBP1 is incomplete. It persistently exists in the cell as a mixture of C20-modified and (more predominantly) unmodified form. Isoprenylation is required for proper subcellular location. Post-translationally, phosphorylated at Ser-156 by PIM1 in absence of infection, inhibits GBP1: phosphorylation promotes interaction with 14-3-3 protein sigma (SFN), leading to GBP1 retention in the cytosol. Dephosphorylated in response to infection, liberating GBP1.

It is found in the cytoplasmic vesicle membrane. Its subcellular location is the golgi apparatus membrane. The protein resides in the cell membrane. The protein localises to the cytoplasm. It localises to the cytosol. It is found in the secreted. The catalysed reaction is GTP + H2O = GDP + phosphate + H(+). The enzyme catalyses GDP + H2O = GMP + phosphate + H(+). In terms of biological role, interferon (IFN)-inducible GTPase that plays important roles in innate immunity against a diverse range of bacterial, viral and protozoan pathogens. Hydrolyzes GTP to GMP in two consecutive cleavage reactions: GTP is first hydrolyzed to GDP and then to GMP in a processive manner. Following infection, recruited to the pathogen-containing vacuoles or vacuole-escaped bacteria and promotes both inflammasome assembly and autophagy. Acts as a positive regulator of inflammasome assembly by facilitating the detection of inflammasome ligands from pathogens. Involved in the lysis of pathogen-containing vacuoles, releasing pathogens into the cytosol. Following pathogen release in the cytosol, forms a protein coat in a GTPase-dependent manner that encapsulates pathogens and promotes the detection of ligands by pattern recognition receptors. Plays a key role in inflammasome assembly in response to infection by Gram-negative bacteria: following pathogen release in the cytosol, forms a protein coat that encapsulates Gram-negative bacteria and directly binds to lipopolysaccharide (LPS), disrupting the O-antigen barrier and unmasking lipid A that is that detected by the non-canonical inflammasome effector CASP4/CASP11. Also promotes recruitment of proteins that mediate bacterial cytolysis, leading to release double-stranded DNA (dsDNA) that activates the AIM2 inflammasome. Involved in autophagy by regulating bacteriolytic peptide generation via its interaction with ubiquitin-binding protein SQSTM1, which delivers monoubiquitinated proteins to autolysosomes for the generation of bacteriolytic peptides. Confers protection to several pathogens, including the bacterial pathogens L.monocytogenes and M.bovis BCG as well as the protozoan pathogen T.gondii. Exhibits antiviral activity against influenza virus. The sequence is that of Guanylate-binding protein 1 (Gbp1) from Mus musculus (Mouse).